The primary structure comprises 562 residues: DNA ligase (562 aa).

Glu250 serves as a coordination point for ATP. The active-site N6-AMP-lysine intermediate is Lys252. Arg257, Arg272, Glu302, Phe342, Arg417, and Lys423 together coordinate ATP.

Belongs to the ATP-dependent DNA ligase family. It depends on Mg(2+) as a cofactor. Zn(2+) is required as a cofactor.

The catalysed reaction is ATP + (deoxyribonucleotide)n-3'-hydroxyl + 5'-phospho-(deoxyribonucleotide)m = (deoxyribonucleotide)n+m + AMP + diphosphate.. It catalyses the reaction NAD(+) + (deoxyribonucleotide)n-3'-hydroxyl + 5'-phospho-(deoxyribonucleotide)m = (deoxyribonucleotide)n+m + AMP + beta-nicotinamide D-nucleotide.. DNA ligase that seals nicks in double-stranded DNA during DNA replication, DNA recombination and DNA repair. Can use both ATP and NAD(+), but NAD(+) may be a preferred nucleotide cofactor. In Thermococcus onnurineus (strain NA1), this protein is DNA ligase.